The sequence spans 237 residues: LexA repressor (237 aa).

A DNA-binding region (H-T-H motif) is located at residues 26-46 (FDEMKDALGLKSKSGIHRLIT). Active-site for autocatalytic cleavage activity residues include Ser-158 and Lys-196.

It belongs to the peptidase S24 family. Homodimer.

It carries out the reaction Hydrolysis of Ala-|-Gly bond in repressor LexA.. Its function is as follows. Represses a number of genes involved in the response to DNA damage (SOS response), including recA and lexA. In the presence of single-stranded DNA, RecA interacts with LexA causing an autocatalytic cleavage which disrupts the DNA-binding part of LexA, leading to derepression of the SOS regulon and eventually DNA repair. The polypeptide is LexA repressor (Rhodospirillum centenum (strain ATCC 51521 / SW)).